The primary structure comprises 129 residues: Ribulose bisphosphate carboxylase small subunit (129 aa).

The protein belongs to the RuBisCO small chain family. In terms of assembly, heterohexadecamer of 8 large and 8 small subunits.

RuBisCO catalyzes two reactions: the carboxylation of D-ribulose 1,5-bisphosphate, the primary event in carbon dioxide fixation, as well as the oxidative fragmentation of the pentose substrate. Both reactions occur simultaneously and in competition at the same active site. Although the small subunit is not catalytic it is essential for maximal activity. The protein is Ribulose bisphosphate carboxylase small subunit of Cereibacter sphaeroides (Rhodobacter sphaeroides).